The primary structure comprises 251 residues: MEMKQISETTLKITISMEDLEDRGMELKDFLIPQEKTEEFFYSVMDELDLPENFKNSGMLSFRVTPKKDRIDVFVTKSELSKDLNLEELADLGDISKMSPEDFFKTLEQSMLEKGDTDAHAKLAEIENMMDKATQEVVEENVSEEQPEKEVETIGYVHYVFDFDNIEAVVRFSQTIDFPIEASELYKNGKGYHMTILLDLENQPSYFANLMYARMLEHANVGTKTRAYLKEHSIQLIHDDAISKLQMIEMG.

The protein belongs to the MecA family. Homodimer.

Enables the recognition and targeting of unfolded and aggregated proteins to the ClpC protease or to other proteins involved in proteolysis. The sequence is that of Adapter protein MecA from Streptococcus agalactiae serotype III (strain NEM316).